The sequence spans 400 residues: uncharacterized protein (400 aa).

36-43 (GSINSGKT) is a binding site for ATP.

The protein belongs to the archaeal ATPase family.

This is an uncharacterized protein from Methanocaldococcus jannaschii (strain ATCC 43067 / DSM 2661 / JAL-1 / JCM 10045 / NBRC 100440) (Methanococcus jannaschii).